The sequence spans 372 residues: MFRSALFLLLAPLALSHTTFTTLYVDEVNQGDGTCVRMNRDANTVTYPIEPLSSKDIACGKDGEKAVSRVCPAKANSLLTFEFRAWADGAQPGSIDISHKGPCAVYMKKVDDATADNNAAGDGWFKIWHTGYDESTEKWCTEKLIDNNGFLSVRVPSDIEQGYYLVRTELLALHAASDAPPDPQFYVNCAQIFVQGGGSAKPETVSIGEGYYSLDSPGVKYNIYEKPLQLPYPIPGPTVYESKGVEERSVCPAQKRTATAQNKGLKPAGCILQRDNWCGFEVPDYSDENGCWASSKKCWDQSDVCYKTALPTGISACDIWMTKCNGIDEACNSGDFNGPPNKGKVLTPEPKKLAGSTQVFKRDVRKYKKWTA.

An N-terminal signal peptide occupies residues 1-16 (MFRSALFLLLAPLALS). Cu(2+)-binding residues include H17 and H99. An intrachain disulfide couples C59 to C189. O2 is bound by residues H174 and Q184. Residue Y186 coordinates Cu(2+).

Belongs to the polysaccharide monooxygenase AA9 family. Requires Cu(2+) as cofactor.

It localises to the secreted. The catalysed reaction is [(1-&gt;4)-beta-D-glucosyl]n+m + reduced acceptor + O2 = 4-dehydro-beta-D-glucosyl-[(1-&gt;4)-beta-D-glucosyl]n-1 + [(1-&gt;4)-beta-D-glucosyl]m + acceptor + H2O.. Functionally, lytic polysaccharide monooxygenase (LPMO) that depolymerizes crystalline and amorphous polysaccharides via the oxidation of scissile alpha- or beta-(1-4)-glycosidic bonds, yielding C1 or C4 oxidation products. Catalysis by LPMOs requires the reduction of the active-site copper from Cu(II) to Cu(I) by a reducing agent and H(2)O(2) or O(2) as a cosubstrate. This is AA9 family lytic polysaccharide monooxygenase C from Aspergillus tamarii.